Reading from the N-terminus, the 55-residue chain is ATP synthase small subunit 6-A, mitochondrial (55 aa).

Residues 1–11 (MRLFDPWPVFF) constitute a mitochondrion transit peptide. Residues 21 to 39 (FLTGFAVTGVLITKLTAGL) form a helical membrane-spanning segment.

It belongs to the ATPase 6 subunit family.

Its subcellular location is the mitochondrion inner membrane. Mitochondrial membrane ATP synthase (F(1)F(0) ATP synthase or Complex V) produces ATP from ADP in the presence of a proton gradient across the membrane which is generated by electron transport complexes of the respiratory chain. F-type ATPases consist of two structural domains, F(1) - containing the extramembraneous catalytic core and F(0) - containing the membrane proton channel, linked together by a central stalk and a peripheral stalk. During catalysis, ATP synthesis in the catalytic domain of F(1) is coupled via a rotary mechanism of the central stalk subunits to proton translocation. Part of the complex F(0) domain. Confers tolerance to several abiotic stresses (e.g. salt, mannitol, drought, oxidative and cold stresses), probably by providing additional energy needed for cell homeostasis. This chain is ATP synthase small subunit 6-A, mitochondrial, found in Arabidopsis thaliana (Mouse-ear cress).